Here is a 273-residue protein sequence, read N- to C-terminus: Bifunctional protein FolD (273 aa).

Residues Gly152–Ser154, Thr179, and Ile220 contribute to the NADP(+) site.

It belongs to the tetrahydrofolate dehydrogenase/cyclohydrolase family. In terms of assembly, homodimer.

It carries out the reaction (6R)-5,10-methylene-5,6,7,8-tetrahydrofolate + NADP(+) = (6R)-5,10-methenyltetrahydrofolate + NADPH. It catalyses the reaction (6R)-5,10-methenyltetrahydrofolate + H2O = (6R)-10-formyltetrahydrofolate + H(+). Its pathway is one-carbon metabolism; tetrahydrofolate interconversion. Functionally, catalyzes the oxidation of 5,10-methylenetetrahydrofolate to 5,10-methenyltetrahydrofolate and then the hydrolysis of 5,10-methenyltetrahydrofolate to 10-formyltetrahydrofolate. The polypeptide is Bifunctional protein FolD (Petrotoga mobilis (strain DSM 10674 / SJ95)).